The chain runs to 525 residues: Bestrophin homolog 15 (525 aa).

The next 4 helical transmembrane spans lie at 36-56 (LFMF…NLII), 71-91 (FDQN…VTII), 237-257 (LAYP…ALIA), and 273-293 (ILYP…VVGW).

It belongs to the anion channel-forming bestrophin (TC 1.A.46) family. Calcium-sensitive chloride channel subfamily. Forms oligomers.

The protein resides in the cell membrane. Functionally, forms chloride channels. This chain is Bestrophin homolog 15 (best-15), found in Caenorhabditis elegans.